The chain runs to 431 residues: Adenylosuccinate synthetase (431 aa).

GTP contacts are provided by residues 12–18 and 40–42; these read GDEGKGK and GHT. Asp13 functions as the Proton acceptor in the catalytic mechanism. 2 residues coordinate Mg(2+): Asp13 and Gly40. IMP-binding positions include 13–16, 38–41, Thr130, Arg144, Gln224, Thr239, and Arg303; these read DEGK and NAGH. His41 acts as the Proton donor in catalysis. 299–305 contacts substrate; that stretch reads STTGRPR. Residues Arg305, 331 to 333, and 413 to 415 each bind GTP; these read KAD and SIG.

Belongs to the adenylosuccinate synthetase family. In terms of assembly, homodimer. Mg(2+) is required as a cofactor.

The protein localises to the cytoplasm. It catalyses the reaction IMP + L-aspartate + GTP = N(6)-(1,2-dicarboxyethyl)-AMP + GDP + phosphate + 2 H(+). Its pathway is purine metabolism; AMP biosynthesis via de novo pathway; AMP from IMP: step 1/2. Its function is as follows. Plays an important role in the de novo pathway of purine nucleotide biosynthesis. Catalyzes the first committed step in the biosynthesis of AMP from IMP. In Cytophaga hutchinsonii (strain ATCC 33406 / DSM 1761 / CIP 103989 / NBRC 15051 / NCIMB 9469 / D465), this protein is Adenylosuccinate synthetase.